Reading from the N-terminus, the 100-residue chain is Thioredoxin (100 aa).

The region spanning Met-1–Lys-100 is the Thioredoxin domain. Cys-29 and Cys-32 form a disulfide bridge.

It belongs to the thioredoxin family.

In terms of biological role, participates in various redox reactions through the reversible oxidation of its active center dithiol to a disulfide and catalyzes dithiol-disulfide exchange reactions. This Mycoplasmoides gallisepticum (strain R(low / passage 15 / clone 2)) (Mycoplasma gallisepticum) protein is Thioredoxin (trxA).